The sequence spans 120 residues: Ribonuclease P protein component 2 (120 aa).

This sequence belongs to the eukaryotic/archaeal RNase P protein component 2 family. In terms of assembly, consists of a catalytic RNA component and at least 4-5 protein subunits.

The protein resides in the cytoplasm. It carries out the reaction Endonucleolytic cleavage of RNA, removing 5'-extranucleotides from tRNA precursor.. Its function is as follows. Part of ribonuclease P, a protein complex that generates mature tRNA molecules by cleaving their 5'-ends. This Thermococcus gammatolerans (strain DSM 15229 / JCM 11827 / EJ3) protein is Ribonuclease P protein component 2.